A 552-amino-acid chain; its full sequence is Putative transport protein PBPRA2144 (552 aa).

5 helical membrane-spanning segments follow: residues isoleucine 4–tryptophan 24, isoleucine 26–phenylalanine 46, phenylalanine 65–serine 85, alanine 95–phenylalanine 115, and methionine 158–leucine 178. RCK C-terminal domains are found at residues lysine 188–glutamate 276 and aspartate 279–asparagine 361. A run of 6 helical transmembrane segments spans residues methionine 371 to leucine 391, phenylalanine 394 to alanine 414, isoleucine 439 to valine 459, leucine 464 to leucine 484, tyrosine 493 to alanine 513, and proline 532 to valine 552.

The protein belongs to the AAE transporter (TC 2.A.81) family. YidE subfamily.

The protein localises to the cell membrane. This Photobacterium profundum (strain SS9) protein is Putative transport protein PBPRA2144.